The following is a 303-amino-acid chain: N-acetyl-D-glucosamine kinase (303 aa).

ATP-binding positions include 4-11 and 133-140; these read GFDIGGTK and GVGGGLVF. Zn(2+) is bound by residues His157, Cys177, Cys179, and Cys184.

Belongs to the ROK (NagC/XylR) family. NagK subfamily.

The enzyme catalyses N-acetyl-D-glucosamine + ATP = N-acetyl-D-glucosamine 6-phosphate + ADP + H(+). It participates in cell wall biogenesis; peptidoglycan recycling. Functionally, catalyzes the phosphorylation of N-acetyl-D-glucosamine (GlcNAc) derived from cell-wall degradation, yielding GlcNAc-6-P. This is N-acetyl-D-glucosamine kinase from Shigella flexneri serotype 5b (strain 8401).